The chain runs to 192 residues: UPF0312 protein YE1254 (192 aa).

Positions 1–23 (MFNKTLLGLTVGALMFTAGSAVA) are cleaved as a signal peptide.

The protein belongs to the UPF0312 family. Type 1 subfamily.

The protein localises to the periplasm. This Yersinia enterocolitica serotype O:8 / biotype 1B (strain NCTC 13174 / 8081) protein is UPF0312 protein YE1254.